A 119-amino-acid polypeptide reads, in one-letter code: Integration host factor subunit beta (119 aa).

Residues A93–M119 are disordered. A compositionally biased stretch (low complexity) spans A97–T112.

This sequence belongs to the bacterial histone-like protein family. In terms of assembly, heterodimer of an alpha and a beta chain.

This protein is one of the two subunits of integration host factor, a specific DNA-binding protein that functions in genetic recombination as well as in transcriptional and translational control. The chain is Integration host factor subunit beta from Bordetella petrii (strain ATCC BAA-461 / DSM 12804 / CCUG 43448).